The sequence spans 429 residues: Histidine--tRNA ligase (429 aa).

This sequence belongs to the class-II aminoacyl-tRNA synthetase family. In terms of assembly, homodimer.

Its subcellular location is the cytoplasm. The enzyme catalyses tRNA(His) + L-histidine + ATP = L-histidyl-tRNA(His) + AMP + diphosphate + H(+). The chain is Histidine--tRNA ligase from Pseudomonas putida (strain W619).